We begin with the raw amino-acid sequence, 62 residues long: UPF0434 protein R03186 (62 aa).

It belongs to the UPF0434 family.

The sequence is that of UPF0434 protein R03186 from Rhizobium meliloti (strain 1021) (Ensifer meliloti).